A 176-amino-acid polypeptide reads, in one-letter code: Probable inosine/xanthosine triphosphatase (176 aa).

Asp-36 contacts Mg(2+).

This sequence belongs to the YjjX NTPase family. As to quaternary structure, homodimer. It depends on Mg(2+) as a cofactor. The cofactor is Mn(2+).

The enzyme catalyses XTP + H2O = XDP + phosphate + H(+). It catalyses the reaction ITP + H2O = IDP + phosphate + H(+). Its function is as follows. Phosphatase that hydrolyzes non-canonical purine nucleotides such as XTP and ITP to their respective diphosphate derivatives. Probably excludes non-canonical purines from DNA/RNA precursor pool, thus preventing their incorporation into DNA/RNA and avoiding chromosomal lesions. The polypeptide is Probable inosine/xanthosine triphosphatase (Saccharolobus islandicus (strain M.16.4 / Kamchatka #3) (Sulfolobus islandicus)).